A 367-amino-acid chain; its full sequence is Putative F-box protein At3g21120 (367 aa).

Residues 1–43 form the F-box domain; sequence MHLPEDLVLEILSKVPAVSLARFRSTCRRWNALVVDGSFAKKH.

This chain is Putative F-box protein At3g21120, found in Arabidopsis thaliana (Mouse-ear cress).